An 88-amino-acid polypeptide reads, in one-letter code: UPF0250 protein Sbal_3280 (88 aa).

Belongs to the UPF0250 family.

This Shewanella baltica (strain OS155 / ATCC BAA-1091) protein is UPF0250 protein Sbal_3280.